The chain runs to 357 residues: Decorin (357 aa).

An N-terminal signal peptide occupies residues 1-16 (MRLVLLFVLLLPVCLA). Positions 17–30 (TRFHQKGLFDFMIE) are excised as a propeptide. A glycan (O-linked (Xyl...) (glycosaminoglycan) serine) is linked at Ser46. Disulfide bonds link Cys52–Cys58 and Cys56–Cys65. LRR repeat units lie at residues 71–91 (ERVP…NNKI), 92–115 (TEIK…NNKI), 116–139 (SKIS…KNNL), 140–160 (KELP…ENEI), 161–184 (SKLR…TNPL), 185–210 (KSSG…DTNI), 211–231 (TSIP…GNKI), 232–255 (SKID…FNSI), 256–279 (SSVE…NNEL), 280–302 (VRVP…NNKI), 303–332 (ASIG…SNPV), and 333–357 (QYWE…GNYK). An N-linked (GlcNAc...) asparagine glycan is attached at Asn209. An N-linked (GlcNAc...) asparagine glycan is attached at Asn260. Cys311 and Cys344 are oxidised to a cystine.

The protein belongs to the small leucine-rich proteoglycan (SLRP) family. SLRP class I subfamily. As to quaternary structure, binds to type I and type II collagen, to fibronectin and TGF-beta. Forms a ternary complex with MFAP2 and ELN. The attached glycosaminoglycan chain can be either chondroitin sulfate or dermatan sulfate depending upon the tissue of origin.

Its subcellular location is the secreted. The protein resides in the extracellular space. The protein localises to the extracellular matrix. May affect the rate of fibrils formation. In Gallus gallus (Chicken), this protein is Decorin (DCN).